The sequence spans 432 residues: MSHNSQIQKIQAREIIDSRGNPTVEVDVTLMDGSFGRAAVPSGASTGEYEAVELRDGDKQRYLGKGVLKAVEHVNVKIQEILKGQDALDQNRVDQLMLDADGTKNKGKLGANAILGTSLAVAKAAAFHSKLPLYRYIGGNFARELPVPMMNIINGGAHADNNVDFQEFMILPVGAKNFREGLRMGAEVFHSLKSVLKGKKLNTAVGDEGGFAPDLTSNVEAIEVILQAIEKAGYKPEKDVLLGLDAASSEFYDKSKKKYVLGAENNKEFSSAELVDYYANLVSKYPIITIEDGLDENDWEGWKLLSEKLGKKIQLVGDDLFVTNIEKLSKGITSGVGNSILIKVNQIGSLSETLASIEMAKKAKYTNVVSHRSGETEDVTISHIAVATNAGQIKTGSLSRTDRIAKYNELLRIEEELGKSAVYKGKETFYNL.

Gln-166 lines the (2R)-2-phosphoglycerate pocket. The active-site Proton donor is Glu-208. Residues Asp-245, Glu-291, and Asp-318 each coordinate Mg(2+). (2R)-2-phosphoglycerate is bound by residues Lys-343, Arg-372, Ser-373, and Lys-394. The active-site Proton acceptor is Lys-343.

Belongs to the enolase family. Mg(2+) serves as cofactor.

The protein localises to the cytoplasm. It is found in the secreted. The protein resides in the cell surface. The enzyme catalyses (2R)-2-phosphoglycerate = phosphoenolpyruvate + H2O. It functions in the pathway carbohydrate degradation; glycolysis; pyruvate from D-glyceraldehyde 3-phosphate: step 4/5. Catalyzes the reversible conversion of 2-phosphoglycerate (2-PG) into phosphoenolpyruvate (PEP). It is essential for the degradation of carbohydrates via glycolysis. The polypeptide is Enolase (Leptospira borgpetersenii serovar Hardjo-bovis (strain L550)).